The sequence spans 303 residues: MKKKILFWVLGILGVLIIGGGIYAYNVYSSVSNTLKEVHQPLKRDQNNSNVGEKVSKSEPVSILLLGADERGEDKGRSDSLMVITLNPKNNSMKTVSIPRDTYTEIVGKGKSDKINHAYAFGGVDMSVATVENFLNVPINYYIEVNMEGFKDIVDAVGGVDVKNDLEFTQDGHHFAKGNIHLTGDQALAFTRMRKQDPRGDFGRQMRQRQVMQGVIKKGASFSSLTGYGDVLAAIQKNVKTNLTQDQMFDMQKNYKDCLKNSEDIQIPGDGHKAADGIWYYYVPDAAKQDLTNKLRTHLEVTK.

Topologically, residues 1-4 are cytoplasmic; that stretch reads MKKK. A helical; Signal-anchor for type II membrane protein transmembrane segment spans residues 5 to 25; it reads ILFWVLGILGVLIIGGGIYAY. Topologically, residues 26 to 303 are extracellular; sequence NVYSSVSNTL…KLRTHLEVTK (278 aa).

Belongs to the LytR/CpsA/Psr (LCP) family.

The protein localises to the cell membrane. It participates in cell wall biogenesis. May catalyze the final step in cell wall teichoic acid biosynthesis, the transfer of the anionic cell wall polymers (APs) from their lipid-linked precursor to the cell wall peptidoglycan (PG). The sequence is that of Polyisoprenyl-teichoic acid--peptidoglycan teichoic acid transferase TagU from Bacillus cereus (strain ZK / E33L).